Reading from the N-terminus, the 131-residue chain is Monothiol glutaredoxin-S6 (131 aa).

The Glutaredoxin domain occupies 31–131; that stretch reads SAFVQNAIYS…KLLGNSQSQR (101 aa). Position 51 (cysteine 51) interacts with [2Fe-2S] cluster.

Belongs to the glutaredoxin family. CPYC subfamily.

Its subcellular location is the cytoplasm. In terms of biological role, may only reduce GSH-thiol disulfides, but not protein disulfides. The sequence is that of Monothiol glutaredoxin-S6 (GRXS6) from Oryza sativa subsp. japonica (Rice).